The primary structure comprises 390 residues: Centrosomal protein of 44 kDa (390 aa).

Residues 11–195 (RNLEQVLRLL…ISEDTLSPIT (185 aa)) are binds with microtubules and centrioles. Positions 233 to 267 (EITALQTMLAECQEKLKELTLIEKRLDCLEQKMKG) form a coiled coil. Positions 323–347 (KNKVGRPASIPLSSRYSTASSDSTP) are disordered. Phosphoserine occurs at positions 331 and 345. The segment covering 335-345 (SSRYSTASSDS) has biased composition (low complexity). At threonine 346 the chain carries Phosphothreonine. Residues 361–385 (SEETTIQKMERMKKMFEETAELLKC) adopt a coiled-coil conformation.

Interacts with CROCC. Interacts with POC1B; the interaction is direct and recruits POC1B to centriolar microtubules. Binds to centriolar microtubules.

It localises to the cytoplasm. The protein resides in the cytoskeleton. It is found in the microtubule organizing center. Its subcellular location is the centrosome. The protein localises to the centriole. It localises to the spindle pole. The protein resides in the midbody. Centriole-enriched microtubule-binding protein involved in centriole biogenesis. In collaboration with CEP295 and POC1B, is required for the centriole-to-centrosome conversion by ensuring the formation of bona fide centriole wall. Functions as a linker component that maintains centrosome cohesion. Associates with CROCC and regulates its stability and localization to the centrosome. The polypeptide is Centrosomal protein of 44 kDa (CEP44) (Macaca fascicularis (Crab-eating macaque)).